The chain runs to 483 residues: Cobyric acid synthase (483 aa).

A GATase cobBQ-type domain is found at 251–438 (ALIVAVPMLP…LHGVFSADRF (188 aa)). The active-site Nucleophile is Cys-333. His-430 is an active-site residue.

It belongs to the CobB/CobQ family. CobQ subfamily.

Its pathway is cofactor biosynthesis; adenosylcobalamin biosynthesis. Functionally, catalyzes amidations at positions B, D, E, and G on adenosylcobyrinic A,C-diamide. NH(2) groups are provided by glutamine, and one molecule of ATP is hydrogenolyzed for each amidation. The chain is Cobyric acid synthase from Brucella suis biovar 1 (strain 1330).